The sequence spans 166 residues: Small ribosomal subunit protein uS5 (166 aa).

Residues 11–74 (LQEKLIAVNR…EKARRNMINV (64 aa)) enclose the S5 DRBM domain.

Belongs to the universal ribosomal protein uS5 family. As to quaternary structure, part of the 30S ribosomal subunit. Contacts proteins S4 and S8.

Its function is as follows. With S4 and S12 plays an important role in translational accuracy. Functionally, located at the back of the 30S subunit body where it stabilizes the conformation of the head with respect to the body. In Haemophilus influenzae (strain 86-028NP), this protein is Small ribosomal subunit protein uS5.